The primary structure comprises 184 residues: Large ribosomal subunit protein uL18 (184 aa).

The protein belongs to the universal ribosomal protein uL18 family. As to quaternary structure, part of the 50S ribosomal subunit. Contacts the 5S and 23S rRNAs.

Functionally, this is one of the proteins that bind and probably mediate the attachment of the 5S RNA into the large ribosomal subunit, where it forms part of the central protuberance. The protein is Large ribosomal subunit protein uL18 of Haloferax mediterranei (strain ATCC 33500 / DSM 1411 / JCM 8866 / NBRC 14739 / NCIMB 2177 / R-4) (Halobacterium mediterranei).